We begin with the raw amino-acid sequence, 135 residues long: Large ribosomal subunit protein uL16c (135 aa).

It belongs to the universal ribosomal protein uL16 family. Part of the 50S ribosomal subunit.

It is found in the plastid. Its subcellular location is the chloroplast. This Drimys granadensis protein is Large ribosomal subunit protein uL16c.